The sequence spans 430 residues: Keratin, type I cytoskeletal 18 (430 aa).

Residue Ser2 is modified to N-acetylserine. Residues 2–79 are head; that stretch reads SFTTRSTFST…GLAGMGGIQN (78 aa). Phosphoserine is present on residues Ser7, Ser10, Ser15, and Ser18. Ser30 and Ser31 each carry phosphoserine; alternate. O-linked (GlcNAc) serine; alternate glycosylation is found at Ser30 and Ser31. A Phosphoserine; by CDK1 modification is found at Ser34. Tyr36 carries the phosphotyrosine modification. Ser42 carries the post-translational modification Phosphoserine. An Omega-N-methylarginine modification is found at Arg45. At Ser49 the chain carries Phosphoserine; alternate. O-linked (GlcNAc) serine; alternate glycosylation occurs at Ser49. Ser51 is subject to Phosphoserine; by MAPKAPK2 and MAPKAPK3. A Phosphothreonine modification is found at Thr52. At Ser53 the chain carries Phosphoserine; by CAMK, PKC/PRKCE and AURKA. At Arg55 the chain carries Omega-N-methylarginine. The residue at position 60 (Ser60) is a Phosphoserine. At Thr65 the chain carries Phosphothreonine. The interval 70-373 is necessary for interaction with PNN; it reads GLAGMGGIQN…EALLNIKVKL (304 aa). The segment at 77 to 128 is interaction with TRADD; sequence IQNEKETMQSLNDRLASYLDRVRSLETENRRLESKIREHLEKKGPQVRDWSH. Residues 80–115 are coil 1A; the sequence is EKETMQSLNDRLASYLDRVRSLETENRRLESKIREH. An IF rod domain is found at 80-391; it reads EKETMQSLND…RLLEDGEDFN (312 aa). A Glycyl lysine isopeptide (Lys-Gly) (interchain with G-Cter in SUMO2) cross-link involves residue Lys81. Phosphoserine is present on residues Ser93 and Ser100. The tract at residues 116 to 132 is linker 1; it reads LEKKGPQVRDWSHYFKI. Residue Lys131 is modified to N6-acetyllysine. Residues 133-224 form a coil 1B region; it reads IEDLRAQIFA…KNHEEEVKGL (92 aa). A Phosphoserine modification is found at Ser177. The linker 12 stretch occupies residues 225-248; the sequence is QAQIASSGLTVEVDAPKSQDLAKI. The tract at residues 243-391 is interaction with DNAJB6; that stretch reads QDLAKIMADI…RLLEDGEDFN (149 aa). A Glycyl lysine isopeptide (Lys-Gly) (interchain with G-Cter in SUMO2) cross-link involves residue Lys247. The coil 2 stretch occupies residues 249 to 387; sequence MADIRAQYDE…ATYRRLLEDG (139 aa). A Phosphothreonine modification is found at Thr302. 3 positions are modified to phosphoserine: Ser305, Ser319, and Ser323. Glycyl lysine isopeptide (Lys-Gly) (interchain with G-Cter in SUMO2) cross-links involve residues Lys370 and Lys372. The tail stretch occupies residues 388 to 430; sequence EDFNLGDALDSSNSMQTIQKTTTRRIVDGKVVSETNDTKVLRH. Phosphoserine is present on residues Ser398, Ser399, and Ser401. Position 404 is a phosphothreonine (Thr404). A Glycyl lysine isopeptide (Lys-Gly) (interchain with G-Cter in SUMO2) cross-link involves residue Lys417. Lys426 carries the N6-acetyllysine; alternate modification. Lys426 is covalently cross-linked (Glycyl lysine isopeptide (Lys-Gly) (interchain with G-Cter in SUMO1); alternate). A Glycyl lysine isopeptide (Lys-Gly) (interchain with G-Cter in SUMO2); alternate cross-link involves residue Lys426.

This sequence belongs to the intermediate filament family. As to quaternary structure, heterotetramer of two type I and two type II keratins. KRT18 associates with KRT8. Interacts with PLEC isoform 1C, when in a heterodimer with KRT8. Interacts with the thrombin-antithrombin complex. Interacts with PNN and mutated CFTR. Interacts with YWHAE, YWHAH and YWHAZ only when phosphorylated. Interacts with DNAJB6, TCHP and TRADD. Interacts with FAM83H. Interacts with EPPK1. Interacts with PKP1 and PKP2. (Microbial infection) Interacts with hepatitis C virus/HCV core protein. Phosphorylation at Ser-34 increases during mitosis. Hyperphosphorylated at Ser-53 in diseased cirrhosis liver. Phosphorylation increases by IL-6. In terms of processing, proteolytically cleaved by caspases during epithelial cell apoptosis. Cleavage occurs at Asp-238 by either caspase-3, caspase-6 or caspase-7. Post-translationally, O-GlcNAcylation increases solubility, and decreases stability by inducing proteasomal degradation. As to expression, expressed in colon, placenta, liver and very weakly in exocervix. Increased expression observed in lymph nodes of breast carcinoma.

Its subcellular location is the nucleus matrix. It is found in the cytoplasm. The protein localises to the perinuclear region. The protein resides in the nucleus. It localises to the nucleolus. Involved in the uptake of thrombin-antithrombin complexes by hepatic cells. When phosphorylated, plays a role in filament reorganization. Involved in the delivery of mutated CFTR to the plasma membrane. Together with KRT8, is involved in interleukin-6 (IL-6)-mediated barrier protection. This Homo sapiens (Human) protein is Keratin, type I cytoskeletal 18 (KRT18).